The chain runs to 206 residues: NADH-quinone oxidoreductase subunit C (206 aa).

This sequence belongs to the complex I 30 kDa subunit family. NDH-1 is composed of 14 different subunits. Subunits NuoB, C, D, E, F, and G constitute the peripheral sector of the complex.

It localises to the cell inner membrane. It catalyses the reaction a quinone + NADH + 5 H(+)(in) = a quinol + NAD(+) + 4 H(+)(out). NDH-1 shuttles electrons from NADH, via FMN and iron-sulfur (Fe-S) centers, to quinones in the respiratory chain. The immediate electron acceptor for the enzyme in this species is believed to be ubiquinone. Couples the redox reaction to proton translocation (for every two electrons transferred, four hydrogen ions are translocated across the cytoplasmic membrane), and thus conserves the redox energy in a proton gradient. This chain is NADH-quinone oxidoreductase subunit C, found in Nitrosomonas europaea (strain ATCC 19718 / CIP 103999 / KCTC 2705 / NBRC 14298).